The following is a 223-amino-acid chain: uncharacterized protein (223 aa).

The first 17 residues, 1–17 (MLGQGLIFISLAFVAHA), serve as a signal peptide directing secretion. N58 is a glycosylation site (N-linked (GlcNAc...) asparagine). The disordered stretch occupies residues 149–188 (VRKKGSRPSKPQKEKQGNKQGSKTEESPNVDEDELESEPE). Over residues 159-174 (PQKEKQGNKQGSKTEE) the composition is skewed to basic and acidic residues. Positions 176 to 187 (PNVDEDELESEP) are enriched in acidic residues. A helical membrane pass occupies residues 191–211 (TFFQKYGLYLIPILFLIIMSG).

Its subcellular location is the endoplasmic reticulum membrane. This is an uncharacterized protein from Schizosaccharomyces pombe (strain 972 / ATCC 24843) (Fission yeast).